A 306-amino-acid polypeptide reads, in one-letter code: Pyridoxal 5'-phosphate synthase subunit SNZERR (306 aa).

D34 is a D-ribose 5-phosphate binding site. K91 acts as the Schiff-base intermediate with D-ribose 5-phosphate in catalysis. G163 is a binding site for D-ribose 5-phosphate. Residue R175 participates in D-glyceraldehyde 3-phosphate binding. D-ribose 5-phosphate-binding positions include G224 and 245–246 (GS).

The protein belongs to the PdxS/SNZ family.

It carries out the reaction aldehydo-D-ribose 5-phosphate + D-glyceraldehyde 3-phosphate + L-glutamine = pyridoxal 5'-phosphate + L-glutamate + phosphate + 3 H2O + H(+). The protein operates within cofactor biosynthesis; pyridoxal 5'-phosphate biosynthesis. Its function is as follows. Catalyzes the formation of pyridoxal 5'-phosphate from ribose 5-phosphate (RBP), glyceraldehyde 3-phosphate (G3P) and ammonia. The ammonia is provided by PDX2. Can also use ribulose 5-phosphate and dihydroxyacetone phosphate as substrates, resulting from enzyme-catalyzed isomerization of RBP and G3P, respectively. Also plays an indirect role in resistance to singlet oxygen-generating photosensitizers. The protein is Pyridoxal 5'-phosphate synthase subunit SNZERR (SNZERR) of Suberites domuncula (Sponge).